The following is a 522-amino-acid chain: GMP synthase [glutamine-hydrolyzing] (522 aa).

Residues lysine 9–leucine 204 enclose the Glutamine amidotransferase type-1 domain. Cysteine 86 acts as the Nucleophile in catalysis. Catalysis depends on residues histidine 178 and glutamate 180. The GMPS ATP-PPase domain occupies tryptophan 205–arginine 397. ATP is bound at residue serine 232–serine 238.

Homodimer.

The catalysed reaction is XMP + L-glutamine + ATP + H2O = GMP + L-glutamate + AMP + diphosphate + 2 H(+). The protein operates within purine metabolism; GMP biosynthesis; GMP from XMP (L-Gln route): step 1/1. In terms of biological role, catalyzes the synthesis of GMP from XMP. The sequence is that of GMP synthase [glutamine-hydrolyzing] from Xylella fastidiosa (strain M23).